A 160-amino-acid chain; its full sequence is Large ribosomal subunit protein uL10 (160 aa).

This sequence belongs to the universal ribosomal protein uL10 family. In terms of assembly, part of the ribosomal stalk of the 50S ribosomal subunit. The N-terminus interacts with L11 and the large rRNA to form the base of the stalk. The C-terminus forms an elongated spine to which L12 dimers bind in a sequential fashion forming a multimeric L10(L12)X complex.

Forms part of the ribosomal stalk, playing a central role in the interaction of the ribosome with GTP-bound translation factors. The polypeptide is Large ribosomal subunit protein uL10 (Ehrlichia canis (strain Jake)).